Reading from the N-terminus, the 144-residue chain is MFNIKIKRINNLAKLPEYAHDGDAGMDLFSIEEKVIDPGGVALIHTGIKIELPEKTEAQIRPRSGLALKNSITVLNTPGTIDEGYRGEIGVILINHGKESFKVEKHMKVAQMVIKPVLKVKILEVDELSDTQRAEGGFGSTGVK.

Residues 63–65, N76, and 80–82 each bind substrate; these read RSG and TID.

Belongs to the dUTPase family. Requires Mg(2+) as cofactor.

It carries out the reaction dUTP + H2O = dUMP + diphosphate + H(+). It functions in the pathway pyrimidine metabolism; dUMP biosynthesis; dUMP from dCTP (dUTP route): step 2/2. This enzyme is involved in nucleotide metabolism: it produces dUMP, the immediate precursor of thymidine nucleotides and it decreases the intracellular concentration of dUTP so that uracil cannot be incorporated into DNA. The protein is Deoxyuridine 5'-triphosphate nucleotidohydrolase of Alkaliphilus metalliredigens (strain QYMF).